The primary structure comprises 60 residues: AVKTITLNLVSPSANRYATFLTEIRDNVRXRSLDYSHSGIDVIGAPSSRDSXLNINFQSP.

It belongs to the ribosome-inactivating protein family. Type 1 RIP subfamily.

The enzyme catalyses Endohydrolysis of the N-glycosidic bond at one specific adenosine on the 28S rRNA.. In terms of biological role, single-chain ribosome-inactivating protein. This Dianthus caryophyllus (Carnation) protein is Ribosome-inactivating protein dianthin-32.